The sequence spans 481 residues: Phosphatidylinositol 4-kinase type 2-beta (481 aa).

Residues 1 to 11 (MEDPSEPDRLA) are compositionally biased toward basic and acidic residues. Positions 1 to 82 (MEDPSEPDRL…VSRSSSAELD (82 aa)) are disordered. A phosphoserine mark is found at Ser12, Ser17, and Ser45. Acidic residues predominate over residues 53–64 (AGEEGEAGDEEL). Positions 120 to 451 (GIFPERISQG…VQIPCVIVER (332 aa)) constitute a PI3K/PI4K catalytic domain. Residues 126–132 (ISQGSSG) form a G-loop region. ATP contacts are provided by Ser133 and Lys148. An important for substrate binding region spans residues 153–155 (EPY). The segment at 161–174 (KWTKYVHKVCCPCC) is important for interaction with membranes. Residues 257–260 (QLFV) and 271–272 (RK) each bind ATP. The tract at residues 264-272 (KEAEYWLRK) is important for interaction with membranes. The interval 301 to 309 (RNTDRGNDN) is catalytic loop. The interval 342–362 (AIDNGLAFPFKHPDEWRAYPF) is activation loop. Residue Asp344 coordinates ATP. The tract at residues 357–366 (WRAYPFHWAW) is important for interaction with membranes.

It belongs to the PI3/PI4-kinase family. Type II PI4K subfamily. Widely expressed.

Its subcellular location is the cytoplasm. The protein resides in the cytosol. It is found in the golgi apparatus membrane. The protein localises to the endoplasmic reticulum membrane. It localises to the cell membrane. Its subcellular location is the early endosome membrane. It carries out the reaction a 1,2-diacyl-sn-glycero-3-phospho-(1D-myo-inositol) + ATP = a 1,2-diacyl-sn-glycero-3-phospho-(1D-myo-inositol 4-phosphate) + ADP + H(+). Its activity is regulated as follows. Inhibited by phenylarsine oxide and adenosine. Activation through membrane association is stimulated by active RAC1. Together with PI4K2A and the type III PI4Ks (PIK4CA and PIK4CB) it contributes to the overall PI4-kinase activity of the cell. This contribution may be especially significant in plasma membrane, endosomal and Golgi compartments. The phosphorylation of phosphatidylinositol (PI) to PI4P is the first committed step in the generation of phosphatidylinositol 4,5-bisphosphate (PIP2), a precursor of the second messenger inositol 1,4,5-trisphosphate (InsP3). Contributes to the production of InsP3 in stimulated cells and is likely to be involved in the regulation of vesicular trafficking. The sequence is that of Phosphatidylinositol 4-kinase type 2-beta (PI4K2B) from Homo sapiens (Human).